The following is a 274-amino-acid chain: Nitrogenase iron protein (274 aa).

Position 8–15 (8–15 (GKGGIGKS)) interacts with ATP. Cys94 provides a ligand contact to [4Fe-4S] cluster. Arg97 carries the ADP-ribosylarginine; by dinitrogenase reductase ADP-ribosyltransferase modification. Cys131 lines the [4Fe-4S] cluster pocket.

It belongs to the NifH/BchL/ChlL family. As to quaternary structure, homodimer. [4Fe-4S] cluster is required as a cofactor. The reversible ADP-ribosylation of Arg-97 inactivates the nitrogenase reductase and regulates nitrogenase activity.

The catalysed reaction is N2 + 8 reduced [2Fe-2S]-[ferredoxin] + 16 ATP + 16 H2O = H2 + 8 oxidized [2Fe-2S]-[ferredoxin] + 2 NH4(+) + 16 ADP + 16 phosphate + 6 H(+). Functionally, the key enzymatic reactions in nitrogen fixation are catalyzed by the nitrogenase complex, which has 2 components: the iron protein and the molybdenum-iron protein. In Chlorobium luteolum (strain DSM 273 / BCRC 81028 / 2530) (Pelodictyon luteolum), this protein is Nitrogenase iron protein.